The sequence spans 468 residues: ATP synthase subunit beta (468 aa).

Residue 148–155 (GGAGVGKT) participates in ATP binding.

Belongs to the ATPase alpha/beta chains family. As to quaternary structure, F-type ATPases have 2 components, CF(1) - the catalytic core - and CF(0) - the membrane proton channel. CF(1) has five subunits: alpha(3), beta(3), gamma(1), delta(1), epsilon(1). CF(0) has three main subunits: a(1), b(2) and c(9-12). The alpha and beta chains form an alternating ring which encloses part of the gamma chain. CF(1) is attached to CF(0) by a central stalk formed by the gamma and epsilon chains, while a peripheral stalk is formed by the delta and b chains.

It localises to the cell inner membrane. It catalyses the reaction ATP + H2O + 4 H(+)(in) = ADP + phosphate + 5 H(+)(out). Its function is as follows. Produces ATP from ADP in the presence of a proton gradient across the membrane. The catalytic sites are hosted primarily by the beta subunits. The sequence is that of ATP synthase subunit beta from Xanthomonas axonopodis pv. citri (strain 306).